Consider the following 409-residue polypeptide: MAVSYDFRPISVCRARESNNVVVKKRSKRSLIGLSQNEMAEALKAIGVPEQQTRMRVRQLWHWLYVRGVSNFDEILNISKPIREMLKNHFSIARPEIVGEQISKDGTRKWLLRFPAREDGRPVEIETVYIPEEGRGTLCLSSQVGCTLTCSFCYTGTQVLVRNLTAEEILAQLLVARDCLGDFPNRTTPDGAIVPVEGRKITNIVMMGMGEPLYNFEVVKKALLIASDGDGLSLSKRRITLSTSGVVPEIVRAGEEIGVMLAVSLHAVHDTLRDMLVPINKKYPLALLIDACRNYPGLSNAKRITFEYVMLKGINDSLDDAKRLIQLLKGIPAKINLIPFNPWPGSNYQCSDWEQIERFADVVNQAGYASPIRIPRGRDILAACGQLKSASERLRKSGRLQIEYAVGNK.

Catalysis depends on glutamate 126, which acts as the Proton acceptor. Residues 132–373 (EEGRGTLCLS…NQAGYASPIR (242 aa)) form the Radical SAM core domain. A disulfide bond links cysteine 139 and cysteine 384. Positions 146, 150, and 153 each coordinate [4Fe-4S] cluster. Residues 210-211 (GE), serine 242, 264-266 (SLH), and asparagine 341 contribute to the S-adenosyl-L-methionine site. Residue cysteine 384 is the S-methylcysteine intermediate of the active site.

This sequence belongs to the radical SAM superfamily. RlmN family. The cofactor is [4Fe-4S] cluster.

Its subcellular location is the cytoplasm. It carries out the reaction adenosine(2503) in 23S rRNA + 2 reduced [2Fe-2S]-[ferredoxin] + 2 S-adenosyl-L-methionine = 2-methyladenosine(2503) in 23S rRNA + 5'-deoxyadenosine + L-methionine + 2 oxidized [2Fe-2S]-[ferredoxin] + S-adenosyl-L-homocysteine. It catalyses the reaction adenosine(37) in tRNA + 2 reduced [2Fe-2S]-[ferredoxin] + 2 S-adenosyl-L-methionine = 2-methyladenosine(37) in tRNA + 5'-deoxyadenosine + L-methionine + 2 oxidized [2Fe-2S]-[ferredoxin] + S-adenosyl-L-homocysteine. In terms of biological role, specifically methylates position 2 of adenine 2503 in 23S rRNA and position 2 of adenine 37 in tRNAs. m2A2503 modification seems to play a crucial role in the proofreading step occurring at the peptidyl transferase center and thus would serve to optimize ribosomal fidelity. This chain is Dual-specificity RNA methyltransferase RlmN, found in Bartonella quintana (strain Toulouse) (Rochalimaea quintana).